The following is a 608-amino-acid chain: ATP-citrate synthase beta chain protein 1 (608 aa).

Residues 214–234 (ILRF…ELGG) and 265–291 (FKSE…KNQA) each bind ATP. Residue Glu231 coordinates Mg(2+). The active-site Tele-phosphohistidine intermediate is His273. Residue 292-302 (LKDAGAVVPTS) coordinates CoA.

The protein belongs to the succinate/malate CoA ligase alpha subunit family. Heterooctamer of 4 alpha and 4 beta chains.

Its subcellular location is the cytoplasm. It is found in the cytosol. It catalyses the reaction oxaloacetate + acetyl-CoA + ADP + phosphate = citrate + ATP + CoA. Functionally, ATP citrate-lyase is the primary enzyme responsible for the synthesis of cytosolic acetyl-CoA, used for the elongation of fatty acids and biosynthesis of isoprenoids, flavonoids and malonated derivatives. May supply substrate to the cytosolic acetyl-CoA carboxylase, which generates the malonyl-CoA used for the synthesis of a multitude of compounds, including very long chain fatty acids and flavonoids. In contrast to all known animal ACL enzymes having a homomeric structure, plant ACLs are composed of alpha and beta chains. This Oryza sativa subsp. japonica (Rice) protein is ATP-citrate synthase beta chain protein 1 (ACLB-1).